Consider the following 294-residue polypeptide: Potassium-transporting ATPase subunit beta (294 aa).

The Cytoplasmic segment spans residues 1-36 (MAALQEKKSCSQRMAEFRHYCWNPDTGQMLGRTPAR). A helical; Signal-anchor for type II membrane protein membrane pass occupies residues 37-57 (WVWISLYYAGFYVVMTGLFAL). Residues 58–294 (CIYVLMQTID…KVEFKLTIQK (237 aa)) lie on the Extracellular side of the membrane. Asn-99, Asn-103, Asn-130, Asn-146, and Asn-161 each carry an N-linked (GlcNAc...) asparagine glycan. Cys-131 and Cys-152 are disulfide-bonded. Cys-162 and Cys-178 are joined by a disulfide. N-linked (GlcNAc...) asparagine glycosylation is found at Asn-193 and Asn-225. The interval 194–294 (NTAPRVDCTF…KVEFKLTIQK (101 aa)) is immunoglobulin-like. A disulfide bridge connects residues Cys-201 and Cys-266.

Belongs to the X(+)/potassium ATPases subunit beta family. The ATPase pump is composed of two subunits: alpha (catalytic) and beta (regulatory). Interacts with alpha subunit ATP12A; this interaction is required for the formation of a functionally active pump and targeting at the plasma membrane. Interacts (via N-terminus) with alpha subunit ATP4A (via the P-domain). N-glycosylation is necessary for assembly and functional expression of the pump at the plasma membrane. Expressed in parietal cells (at protein level).

The protein localises to the apical cell membrane. Its subcellular location is the cell membrane. Functionally, the beta subunit of the gastric H(+)/K(+) ATPase pump which transports H(+) ions in exchange for K(+) ions across the apical membrane of parietal cells. Plays a structural and regulatory role in the assembly and membrane targeting of a functionally active pump. Within a transport cycle, the transfer of a H(+) ion across the membrane is coupled to ATP hydrolysis and is associated with a transient phosphorylation of the alpha subunit that shifts the pump conformation from inward-facing (E1) to outward-facing state (E2). Interacts with the phosphorylation domain of the alpha subunit and functions as a ratchet, stabilizing the lumenal-open E2 conformation and preventing the reverse reaction of the transport cycle. The polypeptide is Potassium-transporting ATPase subunit beta (Atp4b) (Mus musculus (Mouse)).